Here is a 370-residue protein sequence, read N- to C-terminus: Actin-related protein 2/3 complex subunit 1A (370 aa).

6 WD repeats span residues 6–45 (FLLEPITCHAWNRDRTQIALSPNNHEVHIYKKNGSQWTKA), 50–89 (EHNGHITGIDWAPKSDRIVTCGADRNAYVWSQKDGIWKPT), 140–179 (PIRSTVLSLDWHPNNVLLAAGSCDFKCRVFSAYIKEVDEK), 202–241 (GTGGWVHGVSFSASGSRLAWVSHDSTVSVADASKSVQVST), 244–284 (TEFL…TFVS), and 322–365 (LHQN…SSIQ).

The protein belongs to the WD repeat ARPC1 family. As to quaternary structure, probable component of the Arp2/3 complex in which it may replace ARPC1B.

It localises to the cytoplasm. The protein localises to the cytoskeleton. It is found in the nucleus. Its function is as follows. Probably functions as a component of the Arp2/3 complex which is involved in regulation of actin polymerization and together with an activating nucleation-promoting factor (NPF) mediates the formation of branched actin networks. In addition to its role in the cytoplasmic cytoskeleton, the Arp2/3 complex also promotes actin polymerization in the nucleus, thereby regulating gene transcription and repair of damaged DNA. This chain is Actin-related protein 2/3 complex subunit 1A (Arpc1a), found in Rattus norvegicus (Rat).